The primary structure comprises 380 residues: Cytochrome b (380 aa).

Helical transmembrane passes span 33–53, 77–98, 113–133, and 178–198; these read FGSL…FLAM, WLIR…YLHI, WTIG…GYVL, and FFAF…IHLL. Heme b-binding residues include His-83 and His-97. Residues His-182 and His-196 each contribute to the heme b site. An a ubiquinone-binding site is contributed by His-201. A run of 4 helical transmembrane segments spans residues 226 to 246, 288 to 308, 320 to 340, and 347 to 367; these read YKDL…ALFS, LGGV…PFLH, VTQF…WIGG, and FVII…VLIP.

The protein belongs to the cytochrome b family. As to quaternary structure, the cytochrome bc1 complex contains 3 respiratory subunits (MT-CYB, CYC1 and UQCRFS1), 2 core proteins (UQCRC1 and UQCRC2) and probably 6 low-molecular weight proteins. The cofactor is heme b.

The protein resides in the mitochondrion inner membrane. Functionally, component of the ubiquinol-cytochrome c reductase complex (complex III or cytochrome b-c1 complex) that is part of the mitochondrial respiratory chain. The b-c1 complex mediates electron transfer from ubiquinol to cytochrome c. Contributes to the generation of a proton gradient across the mitochondrial membrane that is then used for ATP synthesis. This is Cytochrome b (mt-cyb) from Kareius bicoloratus (Stone flounder).